The primary structure comprises 716 residues: MASVDPSRSFVRDVKRVIIKVGTAVVSRQDGRLALGRVGALCEQVKELNSLGYEVILVTSGAVGVGRQRLRYRKLVNSSFADLQKPQMELDGKACAAVGQSGLMALYDMLFNQLDVSSSQLLVTDSDFENPKFREQLTETVESLLDLKVIPIFNENDAISTRKAPYEDSSGIFWDNDSLAGLLALELKADLLILLSDVDGLYSGPPSEPSSKIIHTYIKEKHQQEITFGDKSRVGRGGMTAKVKAAVLASNSGTPVVITSGFENRSILKVLHGEKIGTLFHKNANLWESSKDVSTREMAVAARDCSRHLQNLSSEERKKILLDVADALEANEDLIRSENEADVAAAQVAGYEKPLVARLTIKPGKIASLAKSIRTLANMEDPINQILKKTEVADDLVLEKTSCPLGVLLIVFESRPDALVQIASLAIRSGNGLLLKGGKEAIRSNTILHKVITDAIPRNVGEKLIGLVTTRDEIADLLKLDDVIDLVIPRGSNKLVSQIKASTKIPVLGHADGICHVYIDKSADMDMAKHIVMDAKIDYPAACNAMETLLVHKDLMKSPGLDDILVALKTEGVNIYGGPIAHKALGFPKAVSFHHEYSSMACTVEFVDDVQSAIDHIHRYGSAHTDCIVTTDDKVAETFLRRVDSAAVFHNASTRFSDGARFGLGAEVGISTGRIHARGPVGVEGLLTTRWILRGRGQVVNGDKDVVYTHKSLPLQ.

The interval 1-296 (MASVDPSRSF…WESSKDVSTR (296 aa)) is glutamate 5-kinase. Residues Ser-60, Asp-157, and Asn-176 each contribute to the substrate site. Residues 196 to 197 (SD), 202 to 207 (YSGPPS), and 236 to 242 (RGGMTAK) contribute to the ATP site. The tract at residues 297-716 (EMAVAARDCS…VYTHKSLPLQ (420 aa)) is gamma-glutamyl phosphate reductase.

This sequence in the N-terminal section; belongs to the glutamate 5-kinase family. The protein in the C-terminal section; belongs to the gamma-glutamyl phosphate reductase family. In terms of tissue distribution, expressed at high levels in leaves.

The enzyme catalyses L-glutamate + ATP = L-glutamyl 5-phosphate + ADP. The catalysed reaction is L-glutamate 5-semialdehyde + phosphate + NADP(+) = L-glutamyl 5-phosphate + NADPH + H(+). The protein operates within amino-acid biosynthesis; L-proline biosynthesis; L-glutamate 5-semialdehyde from L-glutamate: step 1/2. It participates in amino-acid biosynthesis; L-proline biosynthesis; L-glutamate 5-semialdehyde from L-glutamate: step 2/2. Its activity is regulated as follows. Feedback regulated by proline. P5CS plays a key role in proline biosynthesis, leading to osmoregulation in plants. Involved in abiotic stress tolerance. The protein is Delta-1-pyrroline-5-carboxylate synthase 1 of Oryza sativa subsp. japonica (Rice).